Here is a 352-residue protein sequence, read N- to C-terminus: Probable dual-specificity RNA methyltransferase RlmN (352 aa).

Glutamate 99 serves as the catalytic Proton acceptor. The Radical SAM core domain maps to 105-339 (TKSRTTACVS…VTVRRSRGKD (235 aa)). An intrachain disulfide couples cysteine 112 to cysteine 344. 3 residues coordinate [4Fe-4S] cluster: cysteine 119, cysteine 123, and cysteine 126. Residues 170-171 (GE), serine 202, 225-227 (SLH), and asparagine 301 each bind S-adenosyl-L-methionine. Residue cysteine 344 is the S-methylcysteine intermediate of the active site.

The protein belongs to the radical SAM superfamily. RlmN family. Requires [4Fe-4S] cluster as cofactor.

It is found in the cytoplasm. The enzyme catalyses adenosine(2503) in 23S rRNA + 2 reduced [2Fe-2S]-[ferredoxin] + 2 S-adenosyl-L-methionine = 2-methyladenosine(2503) in 23S rRNA + 5'-deoxyadenosine + L-methionine + 2 oxidized [2Fe-2S]-[ferredoxin] + S-adenosyl-L-homocysteine. The catalysed reaction is adenosine(37) in tRNA + 2 reduced [2Fe-2S]-[ferredoxin] + 2 S-adenosyl-L-methionine = 2-methyladenosine(37) in tRNA + 5'-deoxyadenosine + L-methionine + 2 oxidized [2Fe-2S]-[ferredoxin] + S-adenosyl-L-homocysteine. Functionally, specifically methylates position 2 of adenine 2503 in 23S rRNA and position 2 of adenine 37 in tRNAs. This Christiangramia forsetii (strain DSM 17595 / CGMCC 1.15422 / KT0803) (Gramella forsetii) protein is Probable dual-specificity RNA methyltransferase RlmN.